We begin with the raw amino-acid sequence, 207 residues long: Flavin-dependent thymidylate synthase (207 aa).

Residues 1–204 (MQITLLFHTP…KFIFEHCLHK (204 aa)) enclose the ThyX domain. FAD contacts are provided by residues Ser-50 and 74–76 (RHR). Residues 71-74 (EVAR), 84-86 (STR), and Lys-143 each bind dUMP. Positions 74–84 (RHRHTSPSVKS) match the ThyX motif motif. Residues 159 to 161 (NAR) and Asn-165 contribute to the FAD site. Arg-170 serves as a coordination point for dUMP. Arg-170 functions as the Involved in ionization of N3 of dUMP, leading to its activation in the catalytic mechanism.

The protein belongs to the thymidylate synthase ThyX family. As to quaternary structure, homotetramer. FAD serves as cofactor.

The enzyme catalyses dUMP + (6R)-5,10-methylene-5,6,7,8-tetrahydrofolate + NADPH + H(+) = dTMP + (6S)-5,6,7,8-tetrahydrofolate + NADP(+). It participates in pyrimidine metabolism; dTTP biosynthesis. Functionally, catalyzes the reductive methylation of 2'-deoxyuridine-5'-monophosphate (dUMP) to 2'-deoxythymidine-5'-monophosphate (dTMP) while utilizing 5,10-methylenetetrahydrofolate (mTHF) as the methyl donor, and NADPH and FADH(2) as the reductant. The chain is Flavin-dependent thymidylate synthase from Campylobacter jejuni subsp. jejuni serotype O:2 (strain ATCC 700819 / NCTC 11168).